An 866-amino-acid chain; its full sequence is Thiamine diphosphate dependent-3-acetyloctanal synthase PigD (866 aa).

A disordered region spans residues 826–866 (KGWQRDPSDREALQERKDWAARQPESTSTSFDQGQNKEAIS). Over residues 828 to 845 (WQRDPSDREALQERKDWA) the composition is skewed to basic and acidic residues. A compositionally biased stretch (polar residues) spans 849–866 (PESTSTSFDQGQNKEAIS).

It belongs to the TPP enzyme family. Thiamine diphosphate is required as a cofactor.

The catalysed reaction is (2E)-octenal + pyruvate + H(+) = (S)-3-acetyloctanal + CO2. The protein operates within antibiotic biosynthesis; prodigiosin biosynthesis. Involved in the biosynthesis of 2-methyl-3-n-amyl-pyrrole (MAP), one of the terminal products involved in the biosynthesis of the red antibiotic prodigiosin (Pig). Catalyzes the decarboxylation of pyruvate, followed by the modification of the resulting two-carbon fragment acetaldehyde at the C3 position of the 2-octenal (1,2-addition of acetaldehyde) giving 3-acetyloctanal. This chain is Thiamine diphosphate dependent-3-acetyloctanal synthase PigD, found in Serratia sp. (strain ATCC 39006) (Prodigiosinella confusarubida).